Reading from the N-terminus, the 309-residue chain is MSGYNPQNPKELKDVILRRLGAPIINVELTPDQIYDCIQRALELYGEYHFDGLNKGFHVFYVGDDEERYKTGVFDLRGSNVFAVTRILRTNIGSITSMDGNATYPWFTDFLLGMAGINGGMGTSCNRFYGPNAFGADLGYFTQLTSYMGMMQDMLSPIPDFWFNSANEQLKVMGNFQKYDLIIVESWTKSYIDTNKMVGNTVGYGTVGPQDSWSLSERYNNPDHNLVGRVVGQDPNVKQGAYNNRWVKDYATALAKELNGQILARHQGMMLPGGVTIDGQRLIEEARLEKEALREELYLLDPPFGILVG.

As to quaternary structure, gp13 and gp14 form a hetero-oligomer complex with a stoichiometry of 10:5.

It is found in the virion. Functionally, plays a role in the association of the virion head and tail after packaging of viral DNA within the head. Together with gp14, forms a neck at the portal vertex of the head to be ready for the tail attachment. The polypeptide is Neck protein gp13 (13) (Escherichia coli (Bacteriophage T4)).